Reading from the N-terminus, the 522-residue chain is ATP synthase subunit alpha (522 aa).

ATP is bound at residue Gly-176–Thr-183.

The protein belongs to the ATPase alpha/beta chains family. In terms of assembly, F-type ATPases have 2 components, CF(1) - the catalytic core - and CF(0) - the membrane proton channel. CF(1) has five subunits: alpha(3), beta(3), gamma(1), delta(1), epsilon(1). CF(0) has four main subunits: a(1), b(1), b'(1) and c(9-12).

It localises to the cell membrane. It catalyses the reaction ATP + H2O + 4 H(+)(in) = ADP + phosphate + 5 H(+)(out). Produces ATP from ADP in the presence of a proton gradient across the membrane. The alpha chain is a regulatory subunit. This chain is ATP synthase subunit alpha, found in Chloroflexus aurantiacus (strain ATCC 29366 / DSM 635 / J-10-fl).